A 538-amino-acid polypeptide reads, in one-letter code: Putative cysteine ligase BshC (538 aa).

A coiled-coil region spans residues 460–484 (KINEQIELLERMLKRNVEKKHEVEL).

This sequence belongs to the BshC family.

Functionally, involved in bacillithiol (BSH) biosynthesis. May catalyze the last step of the pathway, the addition of cysteine to glucosamine malate (GlcN-Mal) to generate BSH. In Bacillus thuringiensis (strain Al Hakam), this protein is Putative cysteine ligase BshC.